Here is a 258-residue protein sequence, read N- to C-terminus: DNA-directed RNA polymerase subunit Rpo3 (258 aa).

It belongs to the archaeal Rpo3/eukaryotic RPB3 RNA polymerase subunit family. In terms of assembly, part of the RNA polymerase complex.

It localises to the cytoplasm. The catalysed reaction is RNA(n) + a ribonucleoside 5'-triphosphate = RNA(n+1) + diphosphate. DNA-dependent RNA polymerase (RNAP) catalyzes the transcription of DNA into RNA using the four ribonucleoside triphosphates as substrates. The sequence is that of DNA-directed RNA polymerase subunit Rpo3 from Pyrobaculum calidifontis (strain DSM 21063 / JCM 11548 / VA1).